The sequence spans 1386 residues: X-linked retinitis pigmentosa GTPase regulator homolog (1386 aa).

3 disordered regions span residues 1-25 (MFFK…TSSE), 37-56 (AGAR…KARR), and 730-760 (MPQM…PEQH). Low complexity predominate over residues 9–25 (SRKTSANSSSDTSTSSE). Positions 45–56 (SVHRQSGKKARR) are enriched in basic residues. 4 RCC1 repeats span residues 737–787 (SKRS…VLSS), 788–838 (SGQL…FICS), 839–891 (DGSL…VLTD), and 893–943 (GRVL…CITE). The tract at residues 972–994 (LKNTEDPSSPSPSTNGSTPRVNL) is disordered. RCC1 repeat units follow at residues 1034-1085 (EGTL…ASTD) and 1087-1139 (GSVF…FVQK).

Could be a guanine-nucleotide releasing factor for glo-1. May play a role in gut granule biogenesis. Regulates axon termination in PLM and ALM neurons. The protein is X-linked retinitis pigmentosa GTPase regulator homolog (glo-4) of Caenorhabditis elegans.